The following is a 147-amino-acid chain: Plasminogen receptor (KT) (147 aa).

Over 1 to 52 the chain is Extracellular; it reads MGFIFSKSMNENMKNQQEFMVMHARLQLERQLIMQNEMRERQMAMQIAWSRE. A helical transmembrane segment spans residues 53-73; it reads FLKYFGTFFGIATISLAAGAI. The Cytoplasmic segment spans residues 74 to 78; that stretch reads KRKKP. A helical transmembrane segment spans residues 79–99; it reads AFLIPIVPLSFIFTYQYDLGY. Residues 100–147 are Extracellular-facing; sequence GTLLQRMKSEAEDILETEKTKLELPKGLITFESLEKARREQSKFFSDK.

In terms of assembly, interacts with PLAT. Interacts with PLAUR. In terms of tissue distribution, expressed in adrenal medulla (pheochromocytoma).

It is found in the cell membrane. Functionally, receptor for plasminogen. Regulates urokinase plasminogen activator-dependent and stimulates tissue-type plasminogen activator-dependent cell surface plasminogen activation. Proposed to be part of a local catecholaminergic cell plasminogen activation system that regulates neuroendocrine prohormone processing. Involved in regulation of inflammatory response; regulates monocyte chemotactic migration and matrix metalloproteinase activation, such as of MMP2 and MMP9. In Rattus norvegicus (Rat), this protein is Plasminogen receptor (KT) (Plgrkt).